The chain runs to 137 residues: Nucleoside diphosphate kinase (137 aa).

6 residues coordinate ATP: Lys-9, Phe-57, Arg-85, Thr-91, Arg-102, and Asn-112. His-115 (pros-phosphohistidine intermediate) is an active-site residue.

It belongs to the NDK family. In terms of assembly, homotetramer. It depends on Mg(2+) as a cofactor.

The protein localises to the cytoplasm. It catalyses the reaction a 2'-deoxyribonucleoside 5'-diphosphate + ATP = a 2'-deoxyribonucleoside 5'-triphosphate + ADP. The catalysed reaction is a ribonucleoside 5'-diphosphate + ATP = a ribonucleoside 5'-triphosphate + ADP. Major role in the synthesis of nucleoside triphosphates other than ATP. The ATP gamma phosphate is transferred to the NDP beta phosphate via a ping-pong mechanism, using a phosphorylated active-site intermediate. The sequence is that of Nucleoside diphosphate kinase from Campylobacter jejuni subsp. jejuni serotype O:2 (strain ATCC 700819 / NCTC 11168).